The following is a 674-amino-acid chain: Anosmin-1 (674 aa).

Positions 1–21 are cleaved as a signal peptide; that stretch reads MVRRAPGASLALLLWVTAVSC. Intrachain disulfides connect C47/C71, C80/C99, C84/C95, and C110/C114. The N-linked (GlcNAc...) asparagine glycan is linked to N65. A WAP domain is found at 121 to 170; sequence LSVKQGDCPAPEKASGFAAACFESCEADSECSGVKKCCSNGCGHTCQVPK. Fibronectin type-III domains follow at residues 180–281, 286–392, 418–515, and 545–652; these read PRKE…SKDP, APSN…TTQD, RRKP…FFVT, and KPEN…DLPP. Residues N203 and N294 are each glycosylated (N-linked (GlcNAc...) asparagine). Polar residues predominate over residues 388-402; that stretch reads STTQDNRNNNEQTSV. The interval 388–413 is disordered; sequence STTQDNRNNNEQTSVEKPPKGVVDPY. N-linked (GlcNAc...) asparagine glycans are attached at residues N465, N548, and N559. The segment at 655-674 is disordered; the sequence is PHRPHLKHHPHRYKPPPEKY. Basic residues predominate over residues 656-668; that stretch reads HRPHLKHHPHRYK.

The protein localises to the cell surface. Functionally, may be an adhesion-like molecule with anti-protease activity. The protein is Anosmin-1 of Coturnix japonica (Japanese quail).